The sequence spans 328 residues: N-acyl-aromatic-L-amino acid amidohydrolase (carboxylate-forming) A (328 aa).

2 residues coordinate Zn(2+): His30 and Glu33. Residues Arg74 and 81-82 (NR) each bind substrate. His127 serves as a coordination point for Zn(2+). Positions 189 and 300 each coordinate substrate.

The protein belongs to the AspA/AstE family. Aspartoacylase subfamily. Homotetramer. The cofactor is Zn(2+).

It localises to the apical cell membrane. The protein localises to the cytoplasm. The enzyme catalyses an N-acyl-aromatic L-alpha-amino acid + H2O = an aromatic L-alpha-amino acid + a carboxylate. It catalyses the reaction an N-acetyl-L-cysteine-S-conjugate + H2O = an S-substituted L-cysteine + acetate. Its function is as follows. Plays an important role in deacetylating mercapturic acids in kidney proximal tubules. This Danio rerio (Zebrafish) protein is N-acyl-aromatic-L-amino acid amidohydrolase (carboxylate-forming) A (acy3.1).